The primary structure comprises 405 residues: Caspase-1 (405 aa).

The 91-residue stretch at 1–91 (MADKVLKEKR…HLAETLRLSS (91 aa)) folds into the CARD domain. A propeptide spanning residues 1–119 (MADKVLKEKR…SSPALQAMPD (119 aa)) is cleaved from the precursor. Active-site residues include H238 and C286. Residues 299–317 (STGTSGNSSSLAPDDFEDD) constitute a propeptide that is removed on maturation. S303 carries the post-translational modification Phosphoserine.

This sequence belongs to the peptidase C14A family. In terms of assembly, heterotetramer that consists of two anti-parallel arranged heterodimers, each one formed by a 20 kDa (Caspase-1 subunit p20) and a 10 kDa (Caspase-1 subunit p10) subunit. May be a component of the inflammasome, a protein complex which also includes PYCARD, CARD8 and NLRP2 and whose function would be the activation of pro-inflammatory caspases. Component of the AIM2 PANoptosome complex, a multiprotein complex that drives inflammatory cell death (PANoptosis). Both the p10 and p20 subunits interact with MEFV. Interacts with CARD17P/INCA and CARD18. Interacts with SERPINB1; this interaction regulates CASP1 activity. As to quaternary structure, heterotetramer that consists of two anti-parallel arranged heterodimers, each one formed by a 20 kDa (Caspase-1 subunit p20) and a 10 kDa (Caspase-1 subunit p10) subunit. Post-translationally, the two subunits are derived from the precursor sequence by an autocatalytic mechanism. Ubiquitinated via 'Lys-11'-linked polyubiquitination. Deubiquitinated by USP8.

It is found in the cytoplasm. It localises to the cell membrane. The enzyme catalyses Strict requirement for an Asp residue at position P1 and has a preferred cleavage sequence of Tyr-Val-Ala-Asp-|-.. Thiol protease involved in a variety of inflammatory processes by proteolytically cleaving other proteins, such as the precursors of the inflammatory cytokines interleukin-1 beta (IL1B) and interleukin 18 (IL18) as well as the pyroptosis inducer Gasdermin-D (GSDMD), into active mature peptides. Plays a key role in cell immunity as an inflammatory response initiator: once activated through formation of an inflammasome complex, it initiates a pro-inflammatory response through the cleavage of the two inflammatory cytokines IL1B and IL18, releasing the mature cytokines which are involved in a variety of inflammatory processes. Cleaves a tetrapeptide after an Asp residue at position P1. Also initiates pyroptosis, a programmed lytic cell death pathway, through cleavage of GSDMD. In contrast to cleavage of interleukin IL1B, recognition and cleavage of GSDMD is not strictly dependent on the consensus cleavage site but depends on an exosite interface on CASP1 that recognizes and binds the Gasdermin-D, C-terminal (GSDMD-CT) part. Cleaves and activates CASP7 in response to bacterial infection, promoting plasma membrane repair. Upon inflammasome activation, during DNA virus infection but not RNA virus challenge, controls antiviral immunity through the cleavage of CGAS, rendering it inactive. In apoptotic cells, cleaves SPHK2 which is released from cells and remains enzymatically active extracellularly. In Equus caballus (Horse), this protein is Caspase-1 (CASP1).